Here is a 338-residue protein sequence, read N- to C-terminus: Ketol-acid reductoisomerase (NADP(+)) (338 aa).

Residues 1–181 (MKVFYDKDAD…GGGRAGIIET (181 aa)) form the KARI N-terminal Rossmann domain. Residues 24 to 27 (YGSQ), Arg47, and Ser52 each bind NADP(+). His107 is an active-site residue. Gly133 contributes to the NADP(+) binding site. In terms of domain architecture, KARI C-terminal knotted spans 182–327 (NFREETETDL…EKLRAMMPWI (146 aa)). Asp190, Glu194, Glu226, and Glu230 together coordinate Mg(2+). Ser251 serves as a coordination point for substrate.

It belongs to the ketol-acid reductoisomerase family. Mg(2+) is required as a cofactor.

The catalysed reaction is (2R)-2,3-dihydroxy-3-methylbutanoate + NADP(+) = (2S)-2-acetolactate + NADPH + H(+). It catalyses the reaction (2R,3R)-2,3-dihydroxy-3-methylpentanoate + NADP(+) = (S)-2-ethyl-2-hydroxy-3-oxobutanoate + NADPH + H(+). Its pathway is amino-acid biosynthesis; L-isoleucine biosynthesis; L-isoleucine from 2-oxobutanoate: step 2/4. The protein operates within amino-acid biosynthesis; L-valine biosynthesis; L-valine from pyruvate: step 2/4. Its function is as follows. Involved in the biosynthesis of branched-chain amino acids (BCAA). Catalyzes an alkyl-migration followed by a ketol-acid reduction of (S)-2-acetolactate (S2AL) to yield (R)-2,3-dihydroxy-isovalerate. In the isomerase reaction, S2AL is rearranged via a Mg-dependent methyl migration to produce 3-hydroxy-3-methyl-2-ketobutyrate (HMKB). In the reductase reaction, this 2-ketoacid undergoes a metal-dependent reduction by NADPH to yield (R)-2,3-dihydroxy-isovalerate. This is Ketol-acid reductoisomerase (NADP(+)) from Cupriavidus taiwanensis (strain DSM 17343 / BCRC 17206 / CCUG 44338 / CIP 107171 / LMG 19424 / R1) (Ralstonia taiwanensis (strain LMG 19424)).